The chain runs to 234 residues: Endonuclease V (234 aa).

Mg(2+) is bound by residues D42 and D108.

The protein belongs to the endonuclease V family. The cofactor is Mg(2+).

It localises to the cytoplasm. The enzyme catalyses Endonucleolytic cleavage at apurinic or apyrimidinic sites to products with a 5'-phosphate.. DNA repair enzyme involved in the repair of deaminated bases. Selectively cleaves double-stranded DNA at the second phosphodiester bond 3' to a deoxyinosine leaving behind the intact lesion on the nicked DNA. The sequence is that of Endonuclease V from Geotalea uraniireducens (strain Rf4) (Geobacter uraniireducens).